The sequence spans 87 residues: RNA-binding protein Hfq (87 aa).

The Sm domain maps to 9 to 68 (DPFLNTLRRERIPVSIYLVNGIKLQGYIESFDQFVILLKNSISQMIYKHAISTVVPNHTN). The disordered stretch occupies residues 66-87 (HTNNQEHNQSQYNNNNACISKP).

It belongs to the Hfq family. In terms of assembly, homohexamer.

Functionally, RNA chaperone that binds small regulatory RNA (sRNAs) and mRNAs to facilitate mRNA translational regulation in response to envelope stress, environmental stress and changes in metabolite concentrations. Also binds with high specificity to tRNAs. The sequence is that of RNA-binding protein Hfq from Wigglesworthia glossinidia brevipalpis.